An 842-amino-acid chain; its full sequence is Protein P (842 aa).

Positions 1-177 are terminal protein domain (TP); that stretch reads MPLSYQHFRR…FCGSPYSWEQ (177 aa). A spacer region spans residues 178 to 345; sequence ELHHGAFLDG…YCLTHLVNLL (168 aa). The segment at 205–271 is disordered; that stretch reads SRPPVGSSIQ…RHAKNIASRP (67 aa). Polar residues predominate over residues 223 to 239; sequence GPQSQQRPLDGSQQGRS. The polymerase/reverse transcriptase domain (RT) stretch occupies residues 346-689; the sequence is EDWGPCTEHG…YLNLYPVARQ (344 aa). The 244-residue stretch at 356-599 folds into the Reverse transcriptase domain; that stretch reads KHHIRIPRTP…YSLNFMGYVI (244 aa). Residues D428, D550, and D551 each coordinate Mg(2+).

This sequence belongs to the hepadnaviridae P protein family.

It catalyses the reaction DNA(n) + a 2'-deoxyribonucleoside 5'-triphosphate = DNA(n+1) + diphosphate. The enzyme catalyses Endonucleolytic cleavage to 5'-phosphomonoester.. Activated by host HSP70 and HSP40 in vitro to be able to bind the epsilon loop of the pgRNA. Because deletion of the RNase H region renders the protein partly chaperone-independent, the chaperones may be needed indirectly to relieve occlusion of the RNA-binding site by this domain. Inhibited by several reverse-transcriptase inhibitors: Lamivudine, Adefovir and Entecavir. Its function is as follows. Multifunctional enzyme that converts the viral RNA genome into dsDNA in viral cytoplasmic capsids. This enzyme displays a DNA polymerase activity that can copy either DNA or RNA templates, and a ribonuclease H (RNase H) activity that cleaves the RNA strand of RNA-DNA heteroduplexes in a partially processive 3'- to 5'-endonucleasic mode. Neo-synthesized pregenomic RNA (pgRNA) are encapsidated together with the P protein, and reverse-transcribed inside the nucleocapsid. Initiation of reverse-transcription occurs first by binding the epsilon loop on the pgRNA genome, and is initiated by protein priming, thereby the 5'-end of (-)DNA is covalently linked to P protein. Partial (+)DNA is synthesized from the (-)DNA template and generates the relaxed circular DNA (RC-DNA) genome. After budding and infection, the RC-DNA migrates in the nucleus, and is converted into a plasmid-like covalently closed circular DNA (cccDNA). The activity of P protein does not seem to be necessary for cccDNA generation, and is presumably released from (+)DNA by host nuclear DNA repair machinery. The polypeptide is Protein P (Hepatitis B virus genotype E subtype ayw4 (isolate Kou) (HBV-E)).